The following is a 295-amino-acid chain: Acetyl-coenzyme A carboxylase carboxyl transferase subunit beta (295 aa).

The interval 1-20 (MSWLSKLMPSGIRTENTPAK) is disordered. The CoA carboxyltransferase N-terminal domain maps to 28–295 (LWEKCSNCGS…QPHPQDADAA (268 aa)). Zn(2+) is bound by residues Cys-32, Cys-35, Cys-51, and Cys-54. The C4-type zinc-finger motif lies at 32–54 (CSNCGSALYGPELEENLEVCPKC).

The protein belongs to the AccD/PCCB family. As to quaternary structure, acetyl-CoA carboxylase is a heterohexamer composed of biotin carboxyl carrier protein (AccB), biotin carboxylase (AccC) and two subunits each of ACCase subunit alpha (AccA) and ACCase subunit beta (AccD). Requires Zn(2+) as cofactor.

It localises to the cytoplasm. It carries out the reaction N(6)-carboxybiotinyl-L-lysyl-[protein] + acetyl-CoA = N(6)-biotinyl-L-lysyl-[protein] + malonyl-CoA. It participates in lipid metabolism; malonyl-CoA biosynthesis; malonyl-CoA from acetyl-CoA: step 1/1. Its function is as follows. Component of the acetyl coenzyme A carboxylase (ACC) complex. Biotin carboxylase (BC) catalyzes the carboxylation of biotin on its carrier protein (BCCP) and then the CO(2) group is transferred by the transcarboxylase to acetyl-CoA to form malonyl-CoA. The polypeptide is Acetyl-coenzyme A carboxylase carboxyl transferase subunit beta (Xanthomonas campestris pv. campestris (strain 8004)).